Reading from the N-terminus, the 84-residue chain is Cell division topological specificity factor (84 aa).

The protein belongs to the MinE family.

In terms of biological role, prevents the cell division inhibition by proteins MinC and MinD at internal division sites while permitting inhibition at polar sites. This ensures cell division at the proper site by restricting the formation of a division septum at the midpoint of the long axis of the cell. This is Cell division topological specificity factor from Pseudomonas entomophila (strain L48).